The chain runs to 387 residues: Chlorophyll synthase, chloroplastic (387 aa).

The transit peptide at 1-57 directs the protein to the chloroplast; the sequence is MTSILNTVSTIHSSRVTSVDRVGVLSLRNSDSVEFTRRRSGFSTLIYESPGRRFVVR. The tract at residues 62–81 is disordered; sequence DTDKVKSQTPDKAPAGGSSI. 7 helical membrane-spanning segments follow: residues 182-202, 210-230, 241-261, 266-286, 311-331, 336-356, and 364-384; these read VITQ…ILDV, TVFY…APPL, FALG…LFGT, VVVL…VNDF, WICV…LLAS, YALA…KYFL, and VKYQ…TALA.

Belongs to the UbiA prenyltransferase family. Chlorophyll synthase subfamily. As to expression, low level in flower buds, flowers, stems, leaves, greening cotyledons and immature siliques, but not in mature siliques or seeds.

Its subcellular location is the plastid. It localises to the chloroplast membrane. The catalysed reaction is phytyl diphosphate + chlorophyllide a + H(+) = chlorophyll a + diphosphate. The protein operates within porphyrin-containing compound metabolism; chlorophyll biosynthesis. Functionally, involved in one of the last steps of the biosynthesis of chlorophyll a. Catalyzes the esterification of chlorophillide a or b with a preference for geranylgeranyldiphosphate (GGPP) rather than for phytyldiphosphate (PhyPP). The chain is Chlorophyll synthase, chloroplastic (CHLG) from Arabidopsis thaliana (Mouse-ear cress).